The following is a 22-amino-acid chain: Caerin-3.3 (22 aa).

K22 bears the Lysine amide mark.

Expressed by the skin parotoid and/or rostral glands.

It is found in the secreted. Its function is as follows. Antibacterial peptide, that adopts an alpha helical conformation which can disrupt bacterial membranes. Each caerin displays a different antimicrobial specificity. The polypeptide is Caerin-3.3 (Ranoidea caerulea (Green tree frog)).